The primary structure comprises 216 residues: GTP-binding nuclear protein spi1 (216 aa).

A Small GTPase Ran-type domain is found at 6–170 (NVPTFKLVLV…LWLARKLVGN (165 aa)). 17 to 24 (DGGTGKTT) lines the GTP pocket. The residue at position 20 (T20) is a Phosphothreonine. The interval 36–44 (KKYIATLGV) is switch-I. GTP contacts are provided by residues G67, 121–124 (NKVD), and 149–151 (SAK). The segment at 67 to 83 (GQEKLGGLRDGYYIQGQ) is switch-II.

This sequence belongs to the small GTPase superfamily. Ran family. As to quaternary structure, oligomer of dis3, pim1 and spi1. Found in a nuclear export complex with RanGTP, exportin and pre-miRNA. Interacts with fft3.

It is found in the nucleus. Its function is as follows. GTP-binding protein involved in nucleocytoplasmic transport. Required for the import of protein into the nucleus and also for RNA export. The sequence is that of GTP-binding nuclear protein spi1 (spi1) from Schizosaccharomyces pombe (strain 972 / ATCC 24843) (Fission yeast).